Consider the following 811-residue polypeptide: Hypoxia-inducible factor 1-alpha (811 aa).

Residues 1–27 (MDSPGGVTDKKRISSERRKEKSRDAAR) are disordered. A compositionally biased stretch (basic and acidic residues) spans 8–27 (TDKKRISSERRKEKSRDAAR). One can recognise a bHLH domain in the interval 17–70 (RRKEKSRDAARCRRSKESEVFYELAHQLPLPHTVSAHLDKASIMRLTISYLRMR). PAS domains follow at residues 80–157 (TEAN…PVKK) and 228–298 (PHPS…FTKG). The PAC domain maps to 302–345 (TGQYRMLAKQGGYVWVETQATVIYNTKNSQPQCIVCVNYVLSGI). Positions 401 to 587 (APAAGDTIIS…LSPLESSSSG (187 aa)) are ODD. Position 402 is a 4-hydroxyproline (Pro-402). Positions 490-518 (PQVQEQPTSPSDASTSQSSPEPSSPNDYC) are disordered. Positions 496 to 514 (PTSPSDASTSQSSPEPSSP) are enriched in low complexity. The segment at 529-573 (FKLELVEKLFAIDTEAKNPFSTQETDLDLEMLAPYIPMDDDFQLR) is NTAD. A 4-hydroxyproline modification is found at Pro-562. The ID stretch occupies residues 576 to 785 (DQLSPLESSS…GLPQLTSYDC (210 aa)). Polar residues predominate over residues 634-652 (NDTSSAPASPYSGNRSRTA). The disordered stretch occupies residues 634-655 (NDTSSAPASPYSGNRSRTASPI). 2 short sequence motifs (nuclear localization signal) span residues 703–706 (RKRK) and 718–721 (GIGS). The tract at residues 771–811 (SMDESGLPQLTSYDCEVNAPIQGNRNLLQGEELLRALDQVN) is CTAD. Asn-788 carries the post-translational modification (3S)-3-hydroxyasparagine.

As to quaternary structure, efficient DNA binding requires heterodimerization of an alpha and a beta/ARNT subunit. In terms of processing, in normoxia, is hydroxylated on Pro-402 and Pro-562. The hydroxylated prolines promote interaction with VHL, initiating rapid ubiquitination and subsequent proteasomal degradation. Under hypoxia, proline hydroxylation is impaired and ubiquitination is attenuated, resulting in stabilization. Post-translationally, in normoxia, is hydroxylated on Asn-788, thus abrogating interaction with CREBBP and EP300 and preventing transcriptional activation. The iron and 2-oxoglutarate dependent 3-hydroxylation of asparagine is (S) stereospecific within HIF CTAD domains.

It localises to the cytoplasm. The protein resides in the nucleus. It is found in the nucleus speckle. With respect to regulation, induced by reactive oxygen species (ROS). Functions as a master transcriptional regulator of the adaptive response to hypoxia. Under hypoxic conditions, activates the transcription of over 40 genes, including erythropoietin, glucose transporters, glycolytic enzymes, vascular endothelial growth factor, HILPDA, and other genes whose protein products increase oxygen delivery or facilitate metabolic adaptation to hypoxia. Plays an essential role in embryonic vascularization, tumor angiogenesis and pathophysiology of ischemic disease. This Gallus gallus (Chicken) protein is Hypoxia-inducible factor 1-alpha (HIF1A).